The primary structure comprises 193 residues: Epididymal-specific lipocalin-12 (193 aa).

Positions 1 to 19 (MGPWWALWLILTLPQILGG) are cleaved as a signal peptide. Cys88 and Cys193 form a disulfide bridge. 2 N-linked (GlcNAc...) asparagine glycosylation sites follow: Asn143 and Asn172.

It belongs to the calycin superfamily. Lipocalin family. Monomer.

The protein localises to the secreted. In terms of biological role, binds all-trans retinoic acid and may act as a retinoid carrier protein within the epididymis. May play a role in male fertility. This Rattus norvegicus (Rat) protein is Epididymal-specific lipocalin-12 (Lcn12).